The sequence spans 529 residues: Cytochrome P450 monooxygenase 45 (529 aa).

A helical transmembrane segment spans residues 24–44 (VLTICILALLTFVLREIVLYF). N-linked (GlcNAc...) asparagine glycosylation is found at asparagine 185 and asparagine 322. Position 454 (cysteine 454) interacts with heme.

It belongs to the cytochrome P450 family. It depends on heme as a cofactor.

Its subcellular location is the membrane. It functions in the pathway secondary metabolite biosynthesis. Its function is as follows. Cytochrome P450 monooxygenase that is able to use trans-stilbene as a substrate for oxidation. In Postia placenta (strain ATCC 44394 / Madison 698-R) (Brown rot fungus), this protein is Cytochrome P450 monooxygenase 45.